A 506-amino-acid polypeptide reads, in one-letter code: Pyruvate kinase 2 (506 aa).

Serine 24 carries the post-translational modification Phosphoserine. Arginine 51 is a substrate binding site. 4 residues coordinate K(+): asparagine 53, serine 55, aspartate 86, and threonine 87. An ATP-binding site is contributed by 53 to 56; the sequence is NFSH. 2 residues coordinate ATP: arginine 93 and lysine 179. A Mg(2+)-binding site is contributed by glutamate 244. Positions 267, 268, and 300 each coordinate substrate. Aspartate 268 contacts Mg(2+).

It belongs to the pyruvate kinase family. In terms of assembly, homotetramer. Mg(2+) is required as a cofactor. K(+) serves as cofactor.

The enzyme catalyses pyruvate + ATP = phosphoenolpyruvate + ADP + H(+). It participates in carbohydrate degradation; glycolysis; pyruvate from D-glyceraldehyde 3-phosphate: step 5/5. Not activated by fructose-1,6-bisphosphate. In terms of biological role, may be used by cells under conditions in which the level of glycolytic flux is very low. This Saccharomyces cerevisiae (strain ATCC 204508 / S288c) (Baker's yeast) protein is Pyruvate kinase 2 (PYK2).